We begin with the raw amino-acid sequence, 142 residues long: Nucleoside diphosphate kinase (142 aa).

Lys11, Phe59, Arg87, Thr93, Arg104, and Asn114 together coordinate ATP. His117 functions as the Pros-phosphohistidine intermediate in the catalytic mechanism.

This sequence belongs to the NDK family. As to quaternary structure, homotetramer. Requires Mg(2+) as cofactor.

It is found in the cytoplasm. The enzyme catalyses a 2'-deoxyribonucleoside 5'-diphosphate + ATP = a 2'-deoxyribonucleoside 5'-triphosphate + ADP. The catalysed reaction is a ribonucleoside 5'-diphosphate + ATP = a ribonucleoside 5'-triphosphate + ADP. Major role in the synthesis of nucleoside triphosphates other than ATP. The ATP gamma phosphate is transferred to the NDP beta phosphate via a ping-pong mechanism, using a phosphorylated active-site intermediate. This is Nucleoside diphosphate kinase from Pectobacterium carotovorum subsp. carotovorum (strain PC1).